Reading from the N-terminus, the 61-residue chain is Venom protein 22.1 (61 aa).

An N-terminal signal peptide occupies residues 1-18 (MDIKGLLVILFFVLLITG).

Belongs to the non-disulfide-bridged peptide (NDBP) superfamily. Long chain multifunctional peptide (group 2) family. In terms of tissue distribution, expressed by the venom gland.

Its subcellular location is the secreted. The chain is Venom protein 22.1 from Lychas mucronatus (Chinese swimming scorpion).